The sequence spans 1120 residues: MCIVKYLSLIINTMTEHYSQLTGEPDFPSIEENVLKFWQENNIFKKSVDNRDENKRFIFYDGPPFANGLPHYGHLLTGFIKDTVARYKTMAGFKVERRFGWDCHGLPAEMLSEKELGISGKLAIEKFGIEKFNNHCRNSVMKFSKEWKQYVDRQARWVDFENDYKTMNSSFMESIIWSFHELWNKGLIYESIKIVPYSWACQTPLSNFETRMDNAYREKTSKTVTVAFELLESPKFITVENVKTYKILVWTTTPWTLPCNLALAISKNIKYCGAIIKHEMLIFATGYLKIFQEHCKKNNIEYQLYNQDISSVNLEDLHYKPLFKYFADVKNAFKILTADFVVEGEGTGIVHIAPGFGEDDFILCKMQDIPHIEGDTSNLLSIICPIDDGAKFTDKISDFKNMHVFDTNDQIINILKQKNLCFKIDQYLHNYPHCWRTDTPLIYRAMSSWYVEVTKIKDKMIELNKTVNWIPNHICNGQFGKWLENAKDWAISRNRFWGTPLPVWKSDNPNYPRIDVYGSIRKVFNNVKALEEDFDISSINDLHRPYIDNLVRPNPDDPTGKSMMRRVSDVFDCWFESGSMPYAQLHYPFENKEFFENYFPADFITEYIAQTRGWFYTLFILSTALFNKPPFINCICHGVVLDTQGQKLSKRLNNYADPMEIFNQYGSDAMRFLMLSHTVLYGGDLLLDKEGVMIKDVLRNVIKPIWNSYNFFTIYANIDHITAEIITELNELSNIMDRYIICECINTIHSIFNAMEELDQCSNNLGYNIKLACNNITKFFEILNNWYIRRCRSRFWSSEITQDKQDAYNTLYTVIYYMIKVSAPFLPIITEAIWQRLNFQKEESVHLSSLPNISNFILNNEDKQNIQYMKLITCICNYVLSIRSTHNIRIRQPLNKIVIYSHNCPDLLNLPAEYQNILLEEVNVKSISFKSDISDIASFQLKLNFPELGKRIPDKVKRLIFLLKNDQWKILENDKLLLGTIEAEHYVINNNEYTLALKVHNDFACTINLDQHLLGVVLLDNELSNELIMEGIARDIIRTIQHSRKDNKFNISDKIDVIIHTKDNIVKDSIKTWSQYIIQQTLSTSFAIHEEISDIQDINEYYKTTMKDKEVSVFLKKSHT.

Positions 64 to 74 match the 'HIGH' region motif; sequence PFANGLPHYGH. Positions 647–651 match the 'KMSKS' region motif; sequence KLSKR. Residue K650 participates in ATP binding.

This sequence belongs to the class-I aminoacyl-tRNA synthetase family. IleS type 2 subfamily. As to quaternary structure, monomer. Requires Zn(2+) as cofactor.

The protein localises to the cytoplasm. The enzyme catalyses tRNA(Ile) + L-isoleucine + ATP = L-isoleucyl-tRNA(Ile) + AMP + diphosphate. Its function is as follows. Catalyzes the attachment of isoleucine to tRNA(Ile). As IleRS can inadvertently accommodate and process structurally similar amino acids such as valine, to avoid such errors it has two additional distinct tRNA(Ile)-dependent editing activities. One activity is designated as 'pretransfer' editing and involves the hydrolysis of activated Val-AMP. The other activity is designated 'posttransfer' editing and involves deacylation of mischarged Val-tRNA(Ile). The chain is Isoleucine--tRNA ligase from Ehrlichia canis (strain Jake).